The chain runs to 184 residues: ATP synthase subunit delta (184 aa).

Belongs to the ATPase delta chain family. F-type ATPases have 2 components, F(1) - the catalytic core - and F(0) - the membrane proton channel. F(1) has five subunits: alpha(3), beta(3), gamma(1), delta(1), epsilon(1). F(0) has three main subunits: a(1), b(2) and c(10-14). The alpha and beta chains form an alternating ring which encloses part of the gamma chain. F(1) is attached to F(0) by a central stalk formed by the gamma and epsilon chains, while a peripheral stalk is formed by the delta and b chains.

It localises to the cell membrane. F(1)F(0) ATP synthase produces ATP from ADP in the presence of a proton or sodium gradient. F-type ATPases consist of two structural domains, F(1) containing the extramembraneous catalytic core and F(0) containing the membrane proton channel, linked together by a central stalk and a peripheral stalk. During catalysis, ATP synthesis in the catalytic domain of F(1) is coupled via a rotary mechanism of the central stalk subunits to proton translocation. In terms of biological role, this protein is part of the stalk that links CF(0) to CF(1). It either transmits conformational changes from CF(0) to CF(1) or is implicated in proton conduction. This is ATP synthase subunit delta from Rickettsia africae (strain ESF-5).